A 393-amino-acid chain; its full sequence is Chorismate synthase (393 aa).

NADP(+) contacts are provided by arginine 48 and arginine 54. Residues 125-127, 238-239, glycine 278, 293-297, and arginine 319 contribute to the FMN site; these read RSS, NA, and KPTSS. The disordered stretch occupies residues 355–393; that stretch reads ACTTPKIPGHTGPREGQEEGPSDSEPKVEFADDPEPDEA.

Belongs to the chorismate synthase family. As to quaternary structure, homotetramer. It depends on FMNH2 as a cofactor.

The enzyme catalyses 5-O-(1-carboxyvinyl)-3-phosphoshikimate = chorismate + phosphate. It participates in metabolic intermediate biosynthesis; chorismate biosynthesis; chorismate from D-erythrose 4-phosphate and phosphoenolpyruvate: step 7/7. Its function is as follows. Catalyzes the anti-1,4-elimination of the C-3 phosphate and the C-6 proR hydrogen from 5-enolpyruvylshikimate-3-phosphate (EPSP) to yield chorismate, which is the branch point compound that serves as the starting substrate for the three terminal pathways of aromatic amino acid biosynthesis. This reaction introduces a second double bond into the aromatic ring system. This Nitrosospira multiformis (strain ATCC 25196 / NCIMB 11849 / C 71) protein is Chorismate synthase.